The primary structure comprises 305 residues: Probable L-ribulose-5-phosphate 3-epimerase UlaE (305 aa).

Belongs to the L-ribulose-5-phosphate 3-epimerase family.

The catalysed reaction is L-ribulose 5-phosphate = L-xylulose 5-phosphate. It functions in the pathway cofactor degradation; L-ascorbate degradation; D-xylulose 5-phosphate from L-ascorbate: step 3/4. In terms of biological role, catalyzes the isomerization of L-xylulose-5-phosphate to L-ribulose-5-phosphate. Is involved in the anaerobic L-ascorbate utilization. In Mycoplasma pneumoniae (strain ATCC 29342 / M129 / Subtype 1) (Mycoplasmoides pneumoniae), this protein is Probable L-ribulose-5-phosphate 3-epimerase UlaE (ulaE).